The primary structure comprises 630 residues: tRNA uridine 5-carboxymethylaminomethyl modification enzyme MnmG (630 aa).

An FAD-binding site is contributed by 13–18 (GGGHAG). Position 273 to 287 (273 to 287 (GPRYCPSIEDKVMRF)) interacts with NAD(+).

The protein belongs to the MnmG family. Homodimer. Heterotetramer of two MnmE and two MnmG subunits. FAD serves as cofactor.

It localises to the cytoplasm. Functionally, NAD-binding protein involved in the addition of a carboxymethylaminomethyl (cmnm) group at the wobble position (U34) of certain tRNAs, forming tRNA-cmnm(5)s(2)U34. The sequence is that of tRNA uridine 5-carboxymethylaminomethyl modification enzyme MnmG from Actinobacillus pleuropneumoniae serotype 5b (strain L20).